A 374-amino-acid chain; its full sequence is Phosphate acyltransferase (374 aa).

It belongs to the PlsX family. Homodimer. Probably interacts with PlsY.

The protein resides in the cytoplasm. It catalyses the reaction a fatty acyl-[ACP] + phosphate = an acyl phosphate + holo-[ACP]. It functions in the pathway lipid metabolism; phospholipid metabolism. In terms of biological role, catalyzes the reversible formation of acyl-phosphate (acyl-PO(4)) from acyl-[acyl-carrier-protein] (acyl-ACP). This enzyme utilizes acyl-ACP as fatty acyl donor, but not acyl-CoA. The polypeptide is Phosphate acyltransferase (Gluconacetobacter diazotrophicus (strain ATCC 49037 / DSM 5601 / CCUG 37298 / CIP 103539 / LMG 7603 / PAl5)).